Reading from the N-terminus, the 335-residue chain is Nucleotide-binding protein CYA_0911 (335 aa).

20-27 (GLTGSGKT) lines the ATP pocket. Positions 306 to 335 (ARFGPPPPAAGVEQQQVRIPLAGVPAPPHD) are disordered.

Belongs to the RapZ-like family.

In terms of biological role, displays ATPase and GTPase activities. In Synechococcus sp. (strain JA-3-3Ab) (Cyanobacteria bacterium Yellowstone A-Prime), this protein is Nucleotide-binding protein CYA_0911.